The following is a 604-amino-acid chain: 2-isopropylmalate synthase 2, mitochondrial (604 aa).

The transit peptide at methionine 1 to isoleucine 50 directs the protein to the mitochondrion. The Pyruvate carboxyltransferase domain maps to proline 60–threonine 335. A divalent metal cation contacts are provided by aspartate 69, histidine 274, histidine 276, and asparagine 310.

The protein belongs to the alpha-IPM synthase/homocitrate synthase family. LeuA type 2 subfamily. Homodimer. A divalent metal cation serves as cofactor.

It localises to the mitochondrion. The enzyme catalyses 3-methyl-2-oxobutanoate + acetyl-CoA + H2O = (2S)-2-isopropylmalate + CoA + H(+). It participates in amino-acid biosynthesis; L-leucine biosynthesis; L-leucine from 3-methyl-2-oxobutanoate: step 1/4. In terms of biological role, catalyzes the condensation of the acetyl group of acetyl-CoA with 3-methyl-2-oxobutanoate (2-oxoisovalerate) to form 3-carboxy-3-hydroxy-4-methylpentanoate (2-isopropylmalate). Redundant to LEU4, responsible for about 20% of alpha-IPMS activity. Involved in leucine synthesis. The sequence is that of 2-isopropylmalate synthase 2, mitochondrial from Saccharomyces cerevisiae (strain ATCC 204508 / S288c) (Baker's yeast).